Reading from the N-terminus, the 293-residue chain is tRNA pseudouridine synthase A (293 aa).

Asp-60 (nucleophile) is an active-site residue. Tyr-118 contacts substrate.

It belongs to the tRNA pseudouridine synthase TruA family. Homodimer.

It catalyses the reaction uridine(38/39/40) in tRNA = pseudouridine(38/39/40) in tRNA. Its function is as follows. Formation of pseudouridine at positions 38, 39 and 40 in the anticodon stem and loop of transfer RNAs. In Rippkaea orientalis (strain PCC 8801 / RF-1) (Cyanothece sp. (strain PCC 8801)), this protein is tRNA pseudouridine synthase A.